A 593-amino-acid chain; its full sequence is Transcriptional repressor p66-beta (593 aa).

Ser-17 bears the Phosphoserine mark. Residues Lys-33, Lys-66, and Lys-97 each participate in a glycyl lysine isopeptide (Lys-Gly) (interchain with G-Cter in SUMO2) cross-link. The disordered stretch occupies residues 62-123 (ELPTKQDGSG…PERGRLTPSP (62 aa)). Composition is skewed to basic and acidic residues over residues 74–100 (GYEE…KENI) and 108–118 (SARRSEPERGR). Position 120 is a phosphothreonine (Thr-120). Phosphoserine is present on residues Ser-122, Ser-129, Ser-134, and Ser-135. Positions 140-194 (SRMEERLKAANLEMFKGKGIEERQQLIKQLRDELRLEEARLVLLKKLRQSQLQKE) form a coiled coil. A Glycyl lysine isopeptide (Lys-Gly) (interchain with G-Cter in SUMO2) cross-link involves residue Lys-147. Positions 165–195 (LIKQLRDELRLEEARLVLLKKLRQSQLQKEN) are CR1; interaction with MBD2 and MBD3. Lys-199 is covalently cross-linked (Glycyl lysine isopeptide (Lys-Gly) (interchain with G-Cter in SUMO2)). Ser-208 carries the phosphoserine modification. Positions 213–235 (SPAHVGQQGLSKLPSRPGAQGVE) are disordered. Lys-281 participates in a covalent cross-link: Glycyl lysine isopeptide (Lys-Gly) (interchain with G-Cter in SUMO2). Residues Ser-333, Ser-338, and Ser-340 each carry the phosphoserine modification. A CR2; histone tail-binding region spans residues 340–480 (SAMTDAANSQ…QEQEIEQRLQ (141 aa)). Glycyl lysine isopeptide (Lys-Gly) (interchain with G-Cter in SUMO2) cross-links involve residues Lys-353, Lys-454, and Lys-467. A GATA-type zinc finger spans residues 414–467 (RVEPFVCAQCRTDFTPHWKQEKNGKILCEQCMTSNQKKALKAEHTNRLKNAFVK). Residues 449 to 482 (QKKALKAEHTNRLKNAFVKALQQEQEIEQRLQQQ) are a coiled coil. Ser-486 carries the phosphoserine modification. Lys-498 participates in a covalent cross-link: Glycyl lysine isopeptide (Lys-Gly) (interchain with G-Cter in SUMO2).

As to quaternary structure, homooligomer. Component of the nucleosome remodeling and deacetylase (NuRD) repressor complex, composed of core proteins MTA1, MTA2, MTA3, RBBP4, RBBP7, HDAC1, HDAC2, MBD2, MBD3, and peripherally associated proteins CDK2AP1, CDK2AP2, GATAD2A, GATAD2B, CHD3, CHD4 and CHD5. The exact stoichiometry of the NuRD complex is unknown, and some subunits such as MBD2 and MBD3, GATAD2A and GATAD2B, and CHD3, CHD4 and CHD5 define mutually exclusive NuRD complexes. Interacts with MBD2; this is required for the enhancement of MBD2-mediated repression and for targeting to the chromatin. Interacts with MBD3. Component of the MeCP1 histone deacetylase complex. Interacts with histone tails, including that of histones H2A, H2B, H3 and H4. Interacts with ERCC6. In terms of tissue distribution, widely expressed.

It localises to the nucleus speckle. Its subcellular location is the nucleus. The protein localises to the chromosome. Functionally, transcriptional repressor. Acts as a component of the histone deacetylase NuRD complex which participates in the remodeling of chromatin. Enhances MBD2-mediated repression. Efficient repression requires the presence of GATAD2A. Targets MBD3 to discrete loci in the nucleus. May play a role in synapse development. This is Transcriptional repressor p66-beta (GATAD2B) from Homo sapiens (Human).